The chain runs to 359 residues: tRNA-specific 2-thiouridylase MnmA (359 aa).

ATP-binding positions include 10-17 and Leu-36; that span reads GISGGVDS. Residue Cys-101 is the Nucleophile of the active site. The cysteines at positions 101 and 197 are disulfide-linked. Gly-125 lines the ATP pocket. Residues 147-149 are interaction with tRNA; that stretch reads KDQ. The Cysteine persulfide intermediate role is filled by Cys-197. Residues 306–307 are interaction with tRNA; sequence RY.

It belongs to the MnmA/TRMU family.

Its subcellular location is the cytoplasm. The catalysed reaction is S-sulfanyl-L-cysteinyl-[protein] + uridine(34) in tRNA + AH2 + ATP = 2-thiouridine(34) in tRNA + L-cysteinyl-[protein] + A + AMP + diphosphate + H(+). Functionally, catalyzes the 2-thiolation of uridine at the wobble position (U34) of tRNA, leading to the formation of s(2)U34. This chain is tRNA-specific 2-thiouridylase MnmA, found in Chlorobium chlorochromatii (strain CaD3).